We begin with the raw amino-acid sequence, 72 residues long: MSQSVKRTAADKPLAPCPICGKPARTETKPFCSPRCADIDLGRWLGERYVIPGPEEEEMSYPPRSDDENRSR.

Positions 17, 20, 32, and 36 each coordinate Zn(2+). The tract at residues 51-72 is disordered; sequence IPGPEEEEMSYPPRSDDENRSR.

It belongs to the DNA gyrase inhibitor YacG family. In terms of assembly, interacts with GyrB. Zn(2+) serves as cofactor.

Inhibits all the catalytic activities of DNA gyrase by preventing its interaction with DNA. Acts by binding directly to the C-terminal domain of GyrB, which probably disrupts DNA binding by the gyrase. This is DNA gyrase inhibitor YacG from Methylorubrum extorquens (strain PA1) (Methylobacterium extorquens).